The chain runs to 258 residues: MEPSKMAPLKNAPRDALVMAQILKDMGITDYEPRVINQMLEFAFRYVTTILDDAKIYSSHAKKPTVDADDVRLAIQCRADQSFTSPPPRDFLLDIARQKNQTPLPLIKPYAGPRLPPDRYCLTAPNYRLKSLVKKGPNQGRLVPRLSVGAVSSRPTTPTVAPPQAVSVPNKVATPVSVTSQRFAVQIPTSQSTPAKPAPAATSVQNVLINPSMIGSKNILITTNMVSSQSTATDSNPLKRKHDDDDDDDDDDDDNDTM.

The residue at position 1 (Met1) is an N-acetylmethionine. A Phosphoserine modification is found at Ser147. Phosphothreonine is present on residues Thr159 and Thr174. At Ser177 the chain carries Phosphoserine. Residues 227-236 (SSQSTATDSN) are compositionally biased toward polar residues. The tract at residues 227–258 (SSQSTATDSNPLKRKHDDDDDDDDDDDDNDTM) is disordered. The span at 244 to 258 (DDDDDDDDDDDNDTM) shows a compositional bias: acidic residues.

It belongs to the TAF9 family. Binds TAF5 and TAF6. Component of TFIID and the TATA-binding protein-free TAF complex (TFTC). TFIID is composed of TATA binding protein (TBP) and a number of TBP-associated factors (TAFs). Binds N-terminal domain of p53/TP53 which is essential for transcription.

It localises to the nucleus. Essential for cell viability. TAF9 and TAF9L are involved in transcriptional activation as well as repression of distinct but overlapping sets of genes. May have a role in gene regulation associated with apoptosis. TAFs are components of the transcription factor IID (TFIID) complex, the TBP-free TAFII complex (TFTC), the PCAF histone acetylase complex and the STAGA transcription coactivator-HAT complex. TFIID or TFTC are essential for the regulation of RNA polymerase II-mediated transcription. The polypeptide is Transcription initiation factor TFIID subunit 9B (Taf9b) (Rattus norvegicus (Rat)).